Here is a 155-residue protein sequence, read N- to C-terminus: Cytochrome c-type biogenesis protein CcmE (155 aa).

Over 1-8 (MNPIRKKR) the chain is Cytoplasmic. The helical; Signal-anchor for type II membrane protein transmembrane segment at 9-29 (LYWILALLCGVSIAMALALSA) threads the bilayer. Topologically, residues 30–155 (LQENINLFYT…PKRVKQESTR (126 aa)) are periplasmic. 2 residues coordinate heme: H124 and Y128.

It belongs to the CcmE/CycJ family.

It is found in the cell inner membrane. Functionally, heme chaperone required for the biogenesis of c-type cytochromes. Transiently binds heme delivered by CcmC and transfers the heme to apo-cytochromes in a process facilitated by CcmF and CcmH. In Janthinobacterium sp. (strain Marseille) (Minibacterium massiliensis), this protein is Cytochrome c-type biogenesis protein CcmE.